The primary structure comprises 458 residues: Serine protease Do-like HtrB (458 aa).

Residues 1–18 (MDYRRDGQNDQHQTEPSH) are compositionally biased toward basic and acidic residues. A disordered region spans residues 1-42 (MDYRRDGQNDQHQTEPSHTEQQNTENQKLIGHSEQELLDAPV). Over 1-71 (MDYRRDGQND…TAVKKEKKRR (71 aa)) the chain is Cytoplasmic. The chain crosses the membrane as a helical span at residues 72 to 92 (AAWLSPILGGIIGGGLMLGIA). Topologically, residues 93–458 (PYLPSDQNQA…LTKQTESSSS (366 aa)) are extracellular. Residues 146 to 170 (QTSQNNTFGTGGGSSSESESGTGSG) form a disordered region. Active-site charge relay system residues include His187, Asp217, and Ser298. Substrate-binding positions include 296–298 (GNS) and 352–356 (LGVQM). The 85-residue stretch at 356–440 (MIDMSQVPET…KTTIQVLRKG (85 aa)) folds into the PDZ domain.

It belongs to the peptidase S1C family.

Its subcellular location is the cell membrane. The enzyme catalyses Acts on substrates that are at least partially unfolded. The cleavage site P1 residue is normally between a pair of hydrophobic residues, such as Val-|-Val.. In terms of biological role, degrades abnormal exported proteins and responsible for the propeptide processing of a natural pro-protein and for the maturation of a native protein. It also plays a prominent role in stress (heat shock, ethanol, puromycin and NaCl) resistance during active exponential growth. This is Serine protease Do-like HtrB (htrB) from Bacillus subtilis (strain 168).